Here is a 930-residue protein sequence, read N- to C-terminus: MAALDSDSDEDLISYGTGLEPLDEGERPKKPIPLQDQTVRDEKGRYKRFHGAFSGGFSAGYFNTVGSKEGWTPSTFVSSRQNRADKSALGPEDFMDEEDLSEFGIAPKAIVTTDDFASKTKDRIREKARQLAAAAAPIPGATLLDDLITPAKLSVGFELLRKMGWKEGQGVGPRVKRKARRQKPDPGVKIYGCALPPGGSEESEDEDDDYLPDNVTFAPKDVMPVDFTPKDNVHGLAYKGLDPHQALFGMPGEHLNLFGGASEGTSHLLGDVGLSKGRKLGISGQAFGVGALEEEDDDIYATETLSKYDTVLKDEEPGDGLYGWTAPKQYKNQKEPERDLRYVGKILEGFSLASKPLSSKKIYPPPQLPRDYRPVHYFRPVVAATAENAHVLQVLSESSGKAGQDVGTHSRHQLNASKRGELLGEMPIQGSATSVLEFLSQKDKERIKEVKQATDLKAAQAKARSLAQSASSSRAQASTPDLGHSSWHLALGGGTVTTRANNFKPFAKDPEKQRRYEEFLVHMKKGQKDALERCLDPSMTEWERSREREEFARAAQLYVSSNSTLSSRFTHAKEEEDSDQVEVPRDQENDVSDKQSAVKMKMFGKLTRDTFEWHPDKLLCKRFNVPDPYPGSTLVGLPRVKRDKYSVFNFLTLPEPAPLPTAPVPSEKAPQQRGSDKSRKPSRWDTSKQEKKEDSISEFLSQARSKVGPPKQESSALGSKEEQAPEPRPDTTVDKAVDAQTDGEGSRPSMDLFKAIFASSSDEKSSSSEEEQDDSEDSQEHTEEASLKGSQEAAAGETSVVLAAEPEPCEPATPFPIQKAQIDEREEFGPRLPPVFCPNSRQKLEIPQKEKPKKSKERHKSKKEHRRKREKKKKHKKHKHKSKQKNKKSEKNSSSESTDSSDSGSDDGGPAELSPQELLRRLKCLPLRRQ.

The span at 1–12 (MAALDSDSDEDL) shows a compositional bias: acidic residues. Disordered regions lie at residues 1-41 (MAAL…TVRD) and 170-209 (GVGPRVKRKARRQKPDPGVKIYGCALPPGGSEESEDEDDD). A2 is modified (N-acetylalanine). Phosphoserine occurs at positions 6 and 8. The 47-residue stretch at 152-198 (KLSVGFELLRKMGWKEGQGVGPRVKRKARRQKPDPGVKIYGCALPPG) folds into the G-patch domain. Residue K313 forms a Glycyl lysine isopeptide (Lys-Gly) (interchain with G-Cter in SUMO2) linkage. Residue S358 is modified to Phosphoserine. Disordered regions lie at residues 400 to 420 (GKAGQDVGTHSRHQLNASKRG), 465 to 486 (SLAQSASSSRAQASTPDLGHSS), 566 to 596 (SSRFTHAKEEEDSDQVEVPRDQENDVSDKQS), and 654 to 930 (PEPA…LRRQ). Low complexity predominate over residues 465–478 (SLAQSASSSRAQAS). Composition is skewed to basic and acidic residues over residues 582 to 593 (EVPRDQENDVSD) and 674 to 695 (GSDKSRKPSRWDTSKQEKKEDS). The residue at position 715 (S715) is a Phosphoserine. Residues 719–737 (SKEEQAPEPRPDTTVDKAV) are compositionally biased toward basic and acidic residues. Over residues 768-777 (SEEEQDDSED) the composition is skewed to acidic residues. A compositionally biased stretch (basic residues) spans 851–886 (KPKKSKERHKSKKEHRRKREKKKKHKKHKHKSKQKN). Positions 894 to 903 (SSESTDSSDS) are enriched in low complexity. A compositionally biased stretch (basic residues) spans 921-930 (RLKCLPLRRQ).

This sequence belongs to the GPATCH1 family.

The chain is G patch domain-containing protein 1 (Gpatch1) from Mus musculus (Mouse).